The following is a 767-amino-acid chain: Serine/threonine-protein kinase DCLK2 (767 aa).

The interval 1-44 (MASTRSIELEHFEERDKRPRPGSRRGAPSSSGGSSISGPKGNGL) is disordered. The span at 7–19 (IELEHFEERDKRP) shows a compositional bias: basic and acidic residues. Residues 24–43 (RRGAPSSSGGSSISGPKGNG) show a composition bias toward low complexity. Thr-61 carries the post-translational modification Phosphothreonine. Doublecortin domains lie at 72–158 (KKAR…VDYT) and 196–279 (KLVT…AQDD). Positions 301–311 (KYSGSRSPGLS) are enriched in low complexity. Residues 301–391 (KYSGSRSPGL…GPELDRCMSP (91 aa)) form a disordered region. The span at 327–338 (SAYSTAKSPVNG) shows a compositional bias: polar residues. Residues 339 to 362 (TPSSQLSTPKSTKSSSSSPTSPGS) are compositionally biased toward low complexity. Residues 369 to 380 (ISAQGRSSSNVN) show a composition bias toward polar residues. Position 377 is a phosphoserine (Ser-377). Residues 409 to 666 (YRIGKVIGDG…AGEILSHPWV (258 aa)) enclose the Protein kinase domain. ATP is bound by residues 415 to 423 (IGDGNFAVV) and Lys-438. Asp-530 acts as the Proton acceptor in catalysis. Phosphoserine is present on Ser-662. Phosphothreonine is present on Thr-681. Positions 721-734 (HCRDSSKSSREQTS) are enriched in basic and acidic residues. The segment at 721 to 767 (HCRDSSKSSREQTSAREAPPPPESPRPPGPPATSGCDPAGTWRRHRD) is disordered. A compositionally biased stretch (pro residues) spans 738-751 (APPPPESPRPPGPP).

The protein belongs to the protein kinase superfamily. CAMK Ser/Thr protein kinase family. CaMK subfamily. As to quaternary structure, interacts with MAPK8IP1/JIP-1, MAPK8IP2/JIP-2, MAPK9/JNK2, PPP1R9B/NEURABIN-2 and actin. Binds to and stabilizes microtubules; binding affinity is strongly reduced by autophosphorylation. In terms of processing, autophosphorylated.

Its subcellular location is the cytoplasm. It is found in the cytoskeleton. It catalyses the reaction L-seryl-[protein] + ATP = O-phospho-L-seryl-[protein] + ADP + H(+). The catalysed reaction is L-threonyl-[protein] + ATP = O-phospho-L-threonyl-[protein] + ADP + H(+). Functionally, protein kinase with a significantly reduced Ca(2+)+/CAM affinity and dependence compared to other members of the CaMK family. May play a role in the down-regulation of CRE-dependent gene activation probably by phosphorylation of the CREB coactivator CRTC2/TORC2 and the resulting retention of TORC2 in the cytoplasm. The polypeptide is Serine/threonine-protein kinase DCLK2 (Dclk2) (Rattus norvegicus (Rat)).